The primary structure comprises 538 residues: Protein phosphatase EYA2 (538 aa).

The span at 209–230 (HNVPNQSSESLAGEYNTHNGPS) shows a compositional bias: polar residues. Positions 209-263 (HNVPNQSSESLAGEYNTHNGPSTPAKEGDTDRPHRASDGKLRGRSKRSSDPSPAG) are disordered. Basic and acidic residues predominate over residues 234-249 (KEGDTDRPHRASDGKL). D274 functions as the Nucleophile in the catalytic mechanism. D274, D276, and D502 together coordinate Mg(2+). The active-site Proton donor is D276.

This sequence belongs to the HAD-like hydrolase superfamily. EYA family. Interacts with DACH2 and SIX1, and probably with SIX2, SIX4 and SIX5. Interacts with CAPN8. Interacts with GNAZ and GNAI2; this precludes interaction with SIX1. Requires Mg(2+) as cofactor. In terms of tissue distribution, highest expression in muscle with lower levels in kidney, placenta, pancreas, brain and heart.

It is found in the cytoplasm. Its subcellular location is the nucleus. It carries out the reaction O-phospho-L-tyrosyl-[protein] + H2O = L-tyrosyl-[protein] + phosphate. Functionally, functions both as protein phosphatase and as transcriptional coactivator for SIX1, and probably also for SIX2, SIX4 and SIX5. Tyrosine phosphatase that dephosphorylates 'Tyr-142' of histone H2AX (H2AXY142ph) and promotes efficient DNA repair via the recruitment of DNA repair complexes containing MDC1. 'Tyr-142' phosphorylation of histone H2AX plays a central role in DNA repair and acts as a mark that distinguishes between apoptotic and repair responses to genotoxic stress. Its function as histone phosphatase may contribute to its function in transcription regulation during organogenesis. Plays an important role in hypaxial muscle development together with SIX1 and DACH2; in this it is functionally redundant with EYA1. This is Protein phosphatase EYA2 (EYA2) from Homo sapiens (Human).